The chain runs to 315 residues: N-acetyl-gamma-glutamyl-phosphate reductase (315 aa).

Cys117 is a catalytic residue.

Belongs to the NAGSA dehydrogenase family. Type 2 subfamily.

The protein localises to the cytoplasm. It catalyses the reaction N-acetyl-L-glutamate 5-semialdehyde + phosphate + NADP(+) = N-acetyl-L-glutamyl 5-phosphate + NADPH + H(+). It functions in the pathway amino-acid biosynthesis; L-arginine biosynthesis; N(2)-acetyl-L-ornithine from L-glutamate: step 3/4. In terms of biological role, catalyzes the NADPH-dependent reduction of N-acetyl-5-glutamyl phosphate to yield N-acetyl-L-glutamate 5-semialdehyde. In Burkholderia lata (strain ATCC 17760 / DSM 23089 / LMG 22485 / NCIMB 9086 / R18194 / 383), this protein is N-acetyl-gamma-glutamyl-phosphate reductase.